The primary structure comprises 416 residues: Tryptophan synthase beta chain (416 aa).

The residue at position 98 (Lys-98) is an N6-(pyridoxal phosphate)lysine.

Belongs to the TrpB family. Tetramer of two alpha and two beta chains. The cofactor is pyridoxal 5'-phosphate.

It carries out the reaction (1S,2R)-1-C-(indol-3-yl)glycerol 3-phosphate + L-serine = D-glyceraldehyde 3-phosphate + L-tryptophan + H2O. Its pathway is amino-acid biosynthesis; L-tryptophan biosynthesis; L-tryptophan from chorismate: step 5/5. Functionally, the beta subunit is responsible for the synthesis of L-tryptophan from indole and L-serine. The protein is Tryptophan synthase beta chain of Ruegeria pomeroyi (strain ATCC 700808 / DSM 15171 / DSS-3) (Silicibacter pomeroyi).